The following is a 791-amino-acid chain: AP-1 complex subunit gamma-like 2 (791 aa).

Residues 671-786 form the GAE domain; it reads APIPSVRVFE…QEIFEVDNLP (116 aa).

This sequence belongs to the adaptor complexes large subunit family. As to quaternary structure, may interact with AP1S1/Sigma1A-adaptin and AP1S2/Sigma1B-adaptin. Probably does not interact with APB1. Interacts (via GAE domain) with RABEP1, NECAP1, CLINT1 and AFTPH/aftiphilin. Interacts with HBV major surface antigen L. Interacts with HBV core protein C in a ubiquitin-dependent manner. Binds ubiquitin. Widely expressed.

The protein resides in the golgi apparatus membrane. It localises to the cytoplasmic vesicle membrane. Its subcellular location is the endosome membrane. Its function is as follows. May function in protein sorting in late endosomes or multivesucular bodies (MVBs). Involved in MVB-assisted maturation of hepatitis B virus (HBV). This is AP-1 complex subunit gamma-like 2 (Ap1g2) from Mus musculus (Mouse).